The primary structure comprises 170 residues: Large ribosomal subunit protein uL10 (170 aa).

This sequence belongs to the universal ribosomal protein uL10 family. Part of the ribosomal stalk of the 50S ribosomal subunit. The N-terminus interacts with L11 and the large rRNA to form the base of the stalk. The C-terminus forms an elongated spine to which L12 dimers bind in a sequential fashion forming a multimeric L10(L12)X complex.

Functionally, forms part of the ribosomal stalk, playing a central role in the interaction of the ribosome with GTP-bound translation factors. The sequence is that of Large ribosomal subunit protein uL10 from Chlamydia caviae (strain ATCC VR-813 / DSM 19441 / 03DC25 / GPIC) (Chlamydophila caviae).